Consider the following 132-residue polypeptide: UPF0332 protein TM_1000 (132 aa).

It belongs to the UPF0332 family.

This Thermotoga maritima (strain ATCC 43589 / DSM 3109 / JCM 10099 / NBRC 100826 / MSB8) protein is UPF0332 protein TM_1000.